A 334-amino-acid chain; its full sequence is Desumoylating isopeptidase 1 homolog (334 aa).

Positions 30–174 (TVVRLNVYDM…FLEKCIPQEW (145 aa)) constitute a PPPDE domain. Residues histidine 55 and cysteine 133 contribute to the active site. The segment covering 310-325 (SNIGKTNSTPGTTSNG) has biased composition (polar residues). Positions 310–334 (SNIGKTNSTPGTTSNGLAKPTCSEC) are disordered.

Belongs to the DeSI family. As to expression, expressed in the pharynx, hypodermis, intestine, head neuron and tail neuron.

The protein localises to the cytoplasm. The protein resides in the nucleus. In terms of biological role, protease which deconjugates SUMO from some substrate proteins. Has isopeptidase but not SUMO-processing activity. Collaborates with ubql-1 in the export of ubiquitinated proteins from the nucleus to the cytoplasm. This chain is Desumoylating isopeptidase 1 homolog, found in Caenorhabditis elegans.